We begin with the raw amino-acid sequence, 602 residues long: ATP-dependent DNA helicase XPD (602 aa).

In terms of domain architecture, Helicase ATP-binding spans 1–247 (MQKSYGVALE…DLIEMIRSAL (247 aa)). 11–18 (SPTGSGKT) contacts ATP. The [4Fe-4S] cluster site is built by Cys74, Cys95, Cys110, and Cys146. The DEAH box signature appears at 193 to 196 (DEAH). Residues 421-602 (VIEDIILKVK…SAQAREKYGA (182 aa)) form the Helicase C-terminal domain. SsDNA-binding residues include Trp531 and Arg566.

The protein belongs to the helicase family. RAD3/XPD subfamily. Monomer. It depends on [4Fe-4S] cluster as a cofactor.

It carries out the reaction Couples ATP hydrolysis with the unwinding of duplex DNA at the replication fork by translocating in the 5'-3' direction. This creates two antiparallel DNA single strands (ssDNA). The leading ssDNA polymer is the template for DNA polymerase III holoenzyme which synthesizes a continuous strand.. It catalyses the reaction ATP + H2O = ADP + phosphate + H(+). Functionally, ATP-dependent 5'-3' DNA helicase. Thought to be involved in nucleotide excision repair (NER) of DNA. The sequence is that of ATP-dependent DNA helicase XPD from Thermoplasma acidophilum (strain ATCC 25905 / DSM 1728 / JCM 9062 / NBRC 15155 / AMRC-C165).